We begin with the raw amino-acid sequence, 119 residues long: Protein TusC (119 aa).

It belongs to the DsrF/TusC family. Heterohexamer, formed by a dimer of trimers. The hexameric TusBCD complex contains 2 copies each of TusB, TusC and TusD. The TusBCD complex interacts with TusE.

The protein localises to the cytoplasm. Functionally, part of a sulfur-relay system required for 2-thiolation of 5-methylaminomethyl-2-thiouridine (mnm(5)s(2)U) at tRNA wobble positions. The chain is Protein TusC from Shigella sonnei (strain Ss046).